The primary structure comprises 119 residues: U-scoloptoxin(16)-Er11a (119 aa).

The N-terminal stretch at 1–19 is a signal peptide; sequence MKSWTAAVLSLGLIYLSIS.

It belongs to the scoloptoxin-16 family. Contains 4 disulfide bonds. In terms of tissue distribution, expressed by the venom gland.

The protein localises to the secreted. The sequence is that of U-scoloptoxin(16)-Er11a from Ethmostigmus rubripes (Giant centipede).